A 190-amino-acid polypeptide reads, in one-letter code: uncharacterized protein (190 aa).

A helical membrane pass occupies residues 12–34 (LLGLSIFLTTFLFVANFLPGIFA).

The protein localises to the membrane. This is an uncharacterized protein from Archaeoglobus fulgidus (strain ATCC 49558 / DSM 4304 / JCM 9628 / NBRC 100126 / VC-16).